The chain runs to 151 residues: Transcriptional repressor NrdR (151 aa).

Residues 3 to 34 fold into a zinc finger; it reads CPFCNAQDTKVIDSRLVSEGSQVRRRRSCNEC. The region spanning 49–139 is the ATP-cone domain; that stretch reads PRLIKSDGRR…VYRSFKDVKE (91 aa).

Belongs to the NrdR family. The cofactor is Zn(2+).

Negatively regulates transcription of bacterial ribonucleotide reductase nrd genes and operons by binding to NrdR-boxes. This chain is Transcriptional repressor NrdR, found in Psychromonas ingrahamii (strain DSM 17664 / CCUG 51855 / 37).